The primary structure comprises 571 residues: Ferroportin (571 aa).

The Cytoplasmic portion of the chain corresponds to 1 to 23 (MTRAGDHNRQRGCCGSLADYLTS). Residues 24–53 (AKFLLYLGHSLSTWGDRMWHFAVSVFLVEL) form a helical membrane-spanning segment. Fe cation is bound by residues D39 and H43. Topologically, residues 54–57 (YGNS) are extracellular. Residues 58–84 (LLLTAVYGLVVAGSVLVLGAIIGDWVD) form a helical membrane-spanning segment. Residues 85-87 (KNA) lie on the Cytoplasmic side of the membrane. A helical transmembrane segment spans residues 88–118 (RLKVAQTSLVVQNVSVILCGIILMMVFLHKH). The Extracellular segment spans residues 119–126 (ELLTMYHG). A helical membrane pass occupies residues 127–162 (WVLTSCYILIITIANIANLASTATAITIQRDWIVVV). At 163 to 164 (AG) the chain is on the cytoplasmic side. Residues 165-195 (EDRSKLANMNATIRRIDQLTNILAPMAVGQI) form a helical membrane-spanning segment. At 196-202 (MTFGSPV) the chain is on the extracellular side. A helical transmembrane segment spans residues 203-229 (IGCGFISGWNLVSMCVEYVLLWKVYQK). The Cytoplasmic segment spans residues 230 to 306 (TPALAVKAGL…DGWVSYYNQP (77 aa)). Residues 307-333 (VFLAGMGLAFLYMTVLGFDCITTGYAY) traverse the membrane as a helical segment. Position 326 (C326) interacts with Fe cation. The Extracellular segment spans residues 334-338 (TQGLS). The chain crosses the membrane as a helical span at residues 339-366 (GSILSILMGASAITGIMGTVAFTWLRRK). The Cytoplasmic portion of the chain corresponds to 367–368 (CG). A helical membrane pass occupies residues 369–391 (LVRTGLISGLAQLSCLILCVISV). Residues 392-453 (FMPGSPLDLS…ETSPESVPII (62 aa)) are Extracellular-facing. N434 carries an N-linked (GlcNAc...) asparagine glycan. The helical transmembrane segment at 454-483 (SVSLLFAGVIAARIGLWSFDLTVTQLLQEN) threads the bilayer. Over 484–488 (VIESE) the chain is Cytoplasmic. Residues 489-513 (RGIINGVQNSMNYLLDLLHFIMVIL) form a helical membrane-spanning segment. H507 is a binding site for Fe cation. The Extracellular segment spans residues 514–516 (APN). The chain crosses the membrane as a helical span at residues 517–542 (PEAFGLLVLISVSFVAMGHIMYFRFA). Over 543-571 (QNTLGNKLFACGPDAKEVRKENQANTSVV) the chain is Cytoplasmic.

Belongs to the ferroportin (FP) (TC 2.A.100) family. SLC40A subfamily. Identified in a complex with STOM. Interacts with HAMP; affinity of the peptide hormone HAMP for SLC40A1 increases by 80-fold in the presence of iron and the interaction promotes SLC40A1 ubiquitination and degradation. Part of a complex composed of SLC40A1/ferroportin, TF/transferrin and HEPH/hephaestin that transfers iron from cells to transferrin. Post-translationally, polyubiquitinated by RNF217; leading to proteasomal degradation. Under conditions of high systemic iron levels, both the hormone peptide hepcidin/HAMP and holo(iron bound)-transferrin/TF induce the ubiquitination, internalization and proteasomal degradation of SLC40A1 to control iron release from cells. In terms of tissue distribution, detected in erythrocytes (at protein level). Expressed in placenta, intestine, muscle and spleen. Highly expressed in mature red blood.

It is found in the cell membrane. It localises to the basolateral cell membrane. The catalysed reaction is Fe(2+)(in) = Fe(2+)(out). Transports Fe(2+) from the inside of a cell to the outside of the cell, playing a key role for maintaining systemic iron homeostasis. Transports iron from intestinal, splenic, hepatic cells, macrophages and erythrocytes into the blood to provide iron to other tissues. Controls therefore dietary iron uptake, iron recycling by macrophages and erythrocytes, and release of iron stores in hepatocytes. When iron is in excess in serum, circulating HAMP/hepcidin levels increase resulting in a degradation of SLC40A1, thus limiting the iron efflux to plasma. The chain is Ferroportin from Homo sapiens (Human).